We begin with the raw amino-acid sequence, 844 residues long: Receptor-like protein 49 (844 aa).

The signal sequence occupies residues 1–31 (MMYSCRERRMITVKWSLCLIFCLSNSILVFA). At 32 to 803 (KHLCLPDQRD…QDEEKEEEEQ (772 aa)) the chain is on the extracellular side. Asn-59, Asn-95, Asn-112, and Asn-159 each carry an N-linked (GlcNAc...) asparagine glycan. LRR repeat units follow at residues 102–126 (QHLQKLYLGCNTSFGSLSYNDGLKG), 136–160 (LKYLKVLSLRGCNLFGKIPSSLGNL), 161–183 (SYLTHLDLSFNDFTGVIPDSMGN), 185–208 (NYLRVLNLGKCNFYGKVPSSLGNL), 209–231 (SYLAQLDLSYNDFTREGPDSMGN), 242–265 (LNSLTDIDLGSNQLKGMLPSNMSS), 266–290 (LSKLEYFYIGGNSFSGSIPSSLFMI), 292–313 (SLVELDLQRNHFSALEIGNISS), 315–339 (SKLQVLILGGNNFNPDIVDLSIFSP), 345–362 (YLDVSGINLKISSTVSLP), 363–385 (SPIEYLVLSSCNISEFPKFLRNQ), 386–409 (TKLYSLDISANQIEGQVPEWLWSL), 410–434 (PELQSINISHNSFNGFEGPADVIQG), 436–457 (GELYMLDISSNIFQDPFPLLPV), 458–481 (DSMNFLFSSNNRFSGEIPKTICEL), 482–504 (DNLVMLVLSNNNFSGSIPRCFEN), 506–527 (HLYVLHLRNNNLSGIFPEEAIS), 528–551 (DRLQSLDVGHNLFSGELPKSLINC), 553–574 (ALEFLYVEDNRISDTFPSWLEL), 575–601 (LPNFQILVLRSNEFYGPIFSPGDSLSF), 602–625 (PRLRIFDISENRFTGVLPSDYFAP), 665–689 (FTIYKTIDVSGNRLEGDIPESISLL), 690–713 (KELIVLNMSNNAFTGHIPPSLSNL), 714–737 (SNLQSLDLSQNRLSGSIPGELGEL), and 739–762 (FLARMNFSYNRLEGPIPQTTQIQT). An N-linked (GlcNAc...) asparagine glycan is attached at Asn-207. Asn-262 is a glycosylation site (N-linked (GlcNAc...) asparagine). N-linked (GlcNAc...) asparagine glycosylation is present at Asn-310. N-linked (GlcNAc...) asparagine glycans are attached at residues Asn-374 and Asn-384. N-linked (GlcNAc...) asparagine glycosylation is present at Asn-416. Residues Asn-493, Asn-516, and Asn-550 are each glycosylated (N-linked (GlcNAc...) asparagine). Residues Asn-696 and Asn-712 are each glycosylated (N-linked (GlcNAc...) asparagine). The N-linked (GlcNAc...) asparagine glycan is linked to Asn-744. Residues 804–824 (VFSWIAAAIGYVPGVVCGLTI) form a helical membrane-spanning segment. Over 825–844 (GHILVSHKRDWFMRIVSLFT) the chain is Cytoplasmic.

This sequence belongs to the RLP family.

Its subcellular location is the cell membrane. In Arabidopsis thaliana (Mouse-ear cress), this protein is Receptor-like protein 49.